We begin with the raw amino-acid sequence, 240 residues long: Membrane-spanning 4-domains subfamily A member 15 (240 aa).

4 helical membrane passes run 73–93 (VLGT…SVLL), 100–120 (VGIF…FIIS), 144–164 (ILSV…FGVT), and 173–193 (LAVL…AMHF).

This sequence belongs to the MS4A family.

The protein localises to the membrane. In terms of biological role, may be involved in signal transduction as a component of a multimeric receptor complex. The chain is Membrane-spanning 4-domains subfamily A member 15 (MS4A15) from Homo sapiens (Human).